Reading from the N-terminus, the 342-residue chain is Heat-inducible transcription repressor HrcA (342 aa).

The protein belongs to the HrcA family.

Functionally, negative regulator of class I heat shock genes (grpE-dnaK-dnaJ and groELS operons). Prevents heat-shock induction of these operons. This chain is Heat-inducible transcription repressor HrcA, found in Corynebacterium efficiens (strain DSM 44549 / YS-314 / AJ 12310 / JCM 11189 / NBRC 100395).